A 677-amino-acid chain; its full sequence is Collagen alpha-2(IX) chain (677 aa).

The first 21 residues, 1-21, serve as a signal peptide directing secretion; sequence MAHRSPALCLLLLHAACLCLA. Residues 25–161 are triple-helical region 4 (COL4); that stretch reads GPPGEPGPRG…PGKPGPPGHI (137 aa). Pro residues predominate over residues 28 to 41; sequence GEPGPRGPPGPPGV. Residues 28–516 are disordered; sequence GEPGPRGPPG…MPGQRGVAGR (489 aa). Residues 53–66 are compositionally biased toward low complexity; the sequence is SPGAPGSPGAKGEP. Residues 68 to 77 show a composition bias toward pro residues; that stretch reads APGPDGPPGK. A compositionally biased stretch (gly residues) spans 91 to 100; that stretch reads GPWGGQGLKG. Composition is skewed to pro residues over residues 104–121 and 137–158; these read LPGP…PPGL and KGDP…PGPP. At Pro-158 the chain carries 4-hydroxyproline. The interval 162–178 is nonhelical region 4 (NC4); the sequence is QGVEGSADFLCPTNCPP. A glycan (O-linked (Xyl...) (glycosaminoglycan) serine) is linked at Ser-167. Pro-178 is modified (4-hydroxyproline). The interval 179–517 is triple-helical region 3 (COL3); the sequence is GPKGPQGLQG…PGQRGVAGRD (339 aa). Lys-181 bears the 5-hydroxylysine mark. Lys-181 is a glycosylation site (O-linked (Gal...) hydroxylysine). Lys-190 carries the allysine modification. Composition is skewed to low complexity over residues 363-382, 430-442, and 496-505; these read TPGL…AGVP, PGKT…TGDP, and RGLLGERGVP. Positions 518-547 are nonhelical region 3 (NC3); that stretch reads AGDQHIIDVVLKMMQEQLAEVAVSAKRAAL. The triple-helical region 2 (COL2) stretch occupies residues 548 to 630; the sequence is GGVGAMGPPG…PGLPGIPGHA (83 aa). Residues 550–657 are disordered; the sequence is VGAMGPPGPP…GRPGSPGPAG (108 aa). The segment covering 555-565 has biased composition (pro residues); sequence PPGPPGPPGPP. Over residues 597–609 the composition is skewed to basic and acidic residues; sequence KRGEKGERGDTGR. The tract at residues 631 to 632 is nonhelical region 2 (NC2); the sequence is LA. Residues 633 to 662 form a triple-helical region 1 (COL1) region; it reads GKDGERGPPGVPGDAGRPGSPGPAGLPGFC. The interval 663 to 677 is nonhelical region 1 (NC1); the sequence is EPAACLGALPTPRHG.

This sequence belongs to the fibril-associated collagens with interrupted helices (FACIT) family. As to quaternary structure, heterotrimer of an alpha 1(IX), an alpha 2(IX) and an alpha 3(IX) chain. The chains are linked to each other by interchain disulfide bonds. Trimers are also cross-linked via hydroxylysines. In terms of processing, covalently linked to the telopeptides of type II collagen by lysine-derived cross-links. Post-translationally, prolines at the third position of the tripeptide repeating unit (G-X-Y) are hydroxylated in some or all of the chains.

The protein resides in the secreted. Its subcellular location is the extracellular space. It localises to the extracellular matrix. Its function is as follows. Structural component of hyaline cartilage and vitreous of the eye. This chain is Collagen alpha-2(IX) chain (COL9A2), found in Gallus gallus (Chicken).